We begin with the raw amino-acid sequence, 331 residues long: (E)-beta farnesene synthase MBR_03882 (331 aa).

The protein belongs to the trichodiene synthase family.

The enzyme catalyses (2E,6E)-farnesyl diphosphate = (E)-beta-farnesene + diphosphate. Terpene synthase that catalyzes the conversion of (2E,6E)-farnesyl diphosphate (FPP) into the volatile sesquiterpene (E)-beta-farnesene. The polypeptide is (E)-beta farnesene synthase MBR_03882 (Metarhizium brunneum (strain ARSEF 3297)).